The primary structure comprises 351 residues: uncharacterized protein (351 aa).

The interval 25-67 (KKAETETLPPANSQPAAPAPEAKPTEAPVAKAEAKPETPAQPV) is disordered. The span at 33–55 (PPANSQPAAPAPEAKPTEAPVAK) shows a compositional bias: low complexity.

This is an uncharacterized protein from Escherichia coli (strain K12).